The sequence spans 293 residues: DDRGK domain-containing protein 1 (293 aa).

The Lumenal segment spans residues 1–6 (MWGPLI). Residues 7–27 (YALLGLAIVAAAFLFVRRSQA) form a helical membrane-spanning segment. Residues 28–293 (KEVVPVADDD…PADVDETTTA (266 aa)) lie on the Cytoplasmic side of the membrane. Disordered stretches follow at residues 30–151 (VVPV…RQKE) and 273–293 (TDVE…TTTA). Composition is skewed to basic and acidic residues over residues 90–126 (KLQE…KERE) and 133–151 (ERQR…RQKE).

Belongs to the DDRGK1 family.

It is found in the endoplasmic reticulum membrane. In terms of biological role, substrate adapter for ufmylation, the covalent attachment of the ubiquitin-like modifier UFM1 to substrate proteins. This Monosiga brevicollis (Choanoflagellate) protein is DDRGK domain-containing protein 1.